Consider the following 61-residue polypeptide: Large ribosomal subunit protein eL20 (61 aa).

This sequence belongs to the eukaryotic ribosomal protein eL20 family. Part of the 50S ribosomal subunit. Binds 23S rRNA.

The polypeptide is Large ribosomal subunit protein eL20 (Methanosarcina acetivorans (strain ATCC 35395 / DSM 2834 / JCM 12185 / C2A)).